Consider the following 330-residue polypeptide: Aspartate--ammonia ligase (330 aa).

The protein belongs to the class-II aminoacyl-tRNA synthetase family. AsnA subfamily.

The protein localises to the cytoplasm. The enzyme catalyses L-aspartate + NH4(+) + ATP = L-asparagine + AMP + diphosphate + H(+). The protein operates within amino-acid biosynthesis; L-asparagine biosynthesis; L-asparagine from L-aspartate (ammonia route): step 1/1. The sequence is that of Aspartate--ammonia ligase from Salmonella agona (strain SL483).